Reading from the N-terminus, the 173-residue chain is Disulfide bond formation protein B (173 aa).

Over 1–14 the chain is Cytoplasmic; the sequence is MIEFLRRIAAHRLA. The chain crosses the membrane as a helical span at residues 15–31; sequence WGLLAASALFLELSALF. Residues 32 to 49 lie on the Periplasmic side of the membrane; it reads FQYVLGLHPCVMCVYERL. Cysteines 41 and 44 form a disulfide. The chain crosses the membrane as a helical span at residues 50–65; it reads AILGVLSAGLLGMVAP. Residues 66–72 lie on the Cytoplasmic side of the membrane; sequence EKWYLRW. Residues 73-90 form a helical membrane-spanning segment; sequence SALLLWGYSAFRGLQLAL. Over 91 to 145 the chain is Periplasmic; sequence KHVDYQMNPSPFNVCSPFADFPSWAPLDQWLPWLFFPDGDCSEISWQFLSFSMPQ. A disulfide bond links Cys105 and Cys131. A helical transmembrane segment spans residues 146–164; sequence WLVAIFAAYLLVFVVVTIG. At 165-173 the chain is on the cytoplasmic side; sequence NLVKGRCCS.

Belongs to the DsbB family.

The protein resides in the cell inner membrane. Functionally, required for disulfide bond formation in some periplasmic proteins. Acts by oxidizing the DsbA protein. This is Disulfide bond formation protein B from Aeromonas salmonicida (strain A449).